Here is a 169-residue protein sequence, read N- to C-terminus: MANTGDGIILGLDPGSRATGYGLVRERSGVLELVDAGVVRTTSQPDFPSRLGVIFTAVAELIQRHGPAEVSVENVFVSKNAATALKLGQARGAALAACAVAGLSVHSYEPTVIKQSLVGTGRAEKSQVAFMVARVLACRETFAVDATDALAAAVCHLNQRRLTRLCGAR.

Active-site residues include D13, E73, and D145. Mg(2+)-binding residues include D13, E73, and D145.

This sequence belongs to the RuvC family. In terms of assembly, homodimer which binds Holliday junction (HJ) DNA. The HJ becomes 2-fold symmetrical on binding to RuvC with unstacked arms; it has a different conformation from HJ DNA in complex with RuvA. In the full resolvosome a probable DNA-RuvA(4)-RuvB(12)-RuvC(2) complex forms which resolves the HJ. It depends on Mg(2+) as a cofactor.

The protein resides in the cytoplasm. It carries out the reaction Endonucleolytic cleavage at a junction such as a reciprocal single-stranded crossover between two homologous DNA duplexes (Holliday junction).. Functionally, the RuvA-RuvB-RuvC complex processes Holliday junction (HJ) DNA during genetic recombination and DNA repair. Endonuclease that resolves HJ intermediates. Cleaves cruciform DNA by making single-stranded nicks across the HJ at symmetrical positions within the homologous arms, yielding a 5'-phosphate and a 3'-hydroxyl group; requires a central core of homology in the junction. The consensus cleavage sequence is 5'-(A/T)TT(C/G)-3'. Cleavage occurs on the 3'-side of the TT dinucleotide at the point of strand exchange. HJ branch migration catalyzed by RuvA-RuvB allows RuvC to scan DNA until it finds its consensus sequence, where it cleaves and resolves the cruciform DNA. This is Crossover junction endodeoxyribonuclease RuvC from Solidesulfovibrio magneticus (strain ATCC 700980 / DSM 13731 / RS-1) (Desulfovibrio magneticus).